The following is a 275-amino-acid chain: Photosystem II extrinsic protein O (275 aa).

Residues 1 to 28 (MRFRTLLIAFLALCLGLITACSEGPANA) form the signal peptide.

The protein belongs to the PsbO family. PSII is composed of 1 copy each of membrane proteins PsbA, PsbB, PsbC, PsbD, PsbE, PsbF, PsbH, PsbI, PsbJ, PsbK, PsbL, PsbM, PsbT, PsbX, PsbY, PsbZ, Psb30/Ycf12, peripheral proteins PsbO, CyanoQ (PsbQ), PsbU, PsbV and a large number of cofactors. It forms dimeric complexes.

The protein localises to the cellular thylakoid membrane. Functionally, one of the extrinsic, lumenal subunits of photosystem II (PSII), which stabilize and protect the oxygen-evolving complex. PSII is a light-driven water plastoquinone oxidoreductase, using light energy to abstract electrons from H(2)O, generating a proton gradient subsequently used for ATP formation. Required for dimerization of PSII and for binding of PsbQ to PSII. The polypeptide is Photosystem II extrinsic protein O (Crocosphaera subtropica (strain ATCC 51142 / BH68) (Cyanothece sp. (strain ATCC 51142))).